The primary structure comprises 179 residues: Probable RNA 2'-phosphotransferase (179 aa).

This sequence belongs to the KptA/TPT1 family.

Removes the 2'-phosphate from RNA via an intermediate in which the phosphate is ADP-ribosylated by NAD followed by a presumed transesterification to release the RNA and generate ADP-ribose 1''-2''-cyclic phosphate (APPR&gt;P). May function as an ADP-ribosylase. The polypeptide is Probable RNA 2'-phosphotransferase (Fusobacterium nucleatum subsp. nucleatum (strain ATCC 25586 / DSM 15643 / BCRC 10681 / CIP 101130 / JCM 8532 / KCTC 2640 / LMG 13131 / VPI 4355)).